A 312-amino-acid chain; its full sequence is Ribosomal RNA small subunit methyltransferase H (312 aa).

Residues 35–37, Asp-55, Phe-80, Asp-102, and Gln-109 each bind S-adenosyl-L-methionine; that span reads GGH.

It belongs to the methyltransferase superfamily. RsmH family.

It is found in the cytoplasm. It carries out the reaction cytidine(1402) in 16S rRNA + S-adenosyl-L-methionine = N(4)-methylcytidine(1402) in 16S rRNA + S-adenosyl-L-homocysteine + H(+). Functionally, specifically methylates the N4 position of cytidine in position 1402 (C1402) of 16S rRNA. The sequence is that of Ribosomal RNA small subunit methyltransferase H from Pseudoalteromonas translucida (strain TAC 125).